We begin with the raw amino-acid sequence, 383 residues long: Arginine biosynthesis bifunctional protein ArgJ (383 aa).

6 residues coordinate substrate: threonine 146, lysine 168, threonine 179, glutamate 259, asparagine 378, and serine 383. Threonine 179 acts as the Nucleophile in catalysis.

Belongs to the ArgJ family. In terms of assembly, heterotetramer of two alpha and two beta chains.

The protein resides in the cytoplasm. The enzyme catalyses N(2)-acetyl-L-ornithine + L-glutamate = N-acetyl-L-glutamate + L-ornithine. It carries out the reaction L-glutamate + acetyl-CoA = N-acetyl-L-glutamate + CoA + H(+). Its pathway is amino-acid biosynthesis; L-arginine biosynthesis; L-ornithine and N-acetyl-L-glutamate from L-glutamate and N(2)-acetyl-L-ornithine (cyclic): step 1/1. The protein operates within amino-acid biosynthesis; L-arginine biosynthesis; N(2)-acetyl-L-ornithine from L-glutamate: step 1/4. In terms of biological role, catalyzes two activities which are involved in the cyclic version of arginine biosynthesis: the synthesis of N-acetylglutamate from glutamate and acetyl-CoA as the acetyl donor, and of ornithine by transacetylation between N(2)-acetylornithine and glutamate. This is Arginine biosynthesis bifunctional protein ArgJ from Streptomyces avermitilis (strain ATCC 31267 / DSM 46492 / JCM 5070 / NBRC 14893 / NCIMB 12804 / NRRL 8165 / MA-4680).